A 363-amino-acid chain; its full sequence is NAD(P)H-quinone oxidoreductase subunit 1, chloroplastic (363 aa).

Helical transmembrane passes span 26-46 (IIWV…GVLV), 98-118 (FSIG…VIPF), 127-147 (LSIG…GLLM), 253-273 (FGLF…FVTV), 300-320 (VFGT…FLFI), and 336-356 (LLNL…LLTT).

Belongs to the complex I subunit 1 family. NDH is composed of at least 16 different subunits, 5 of which are encoded in the nucleus.

It localises to the plastid. It is found in the chloroplast thylakoid membrane. The enzyme catalyses a plastoquinone + NADH + (n+1) H(+)(in) = a plastoquinol + NAD(+) + n H(+)(out). It carries out the reaction a plastoquinone + NADPH + (n+1) H(+)(in) = a plastoquinol + NADP(+) + n H(+)(out). In terms of biological role, NDH shuttles electrons from NAD(P)H:plastoquinone, via FMN and iron-sulfur (Fe-S) centers, to quinones in the photosynthetic chain and possibly in a chloroplast respiratory chain. The immediate electron acceptor for the enzyme in this species is believed to be plastoquinone. Couples the redox reaction to proton translocation, and thus conserves the redox energy in a proton gradient. The protein is NAD(P)H-quinone oxidoreductase subunit 1, chloroplastic of Helianthus annuus (Common sunflower).